The chain runs to 738 residues: Ethylene receptor (738 aa).

3 consecutive transmembrane segments (helical) span residues 23–43 (ISDF…IYFV), 54–74 (VLVQ…INLW), and 92–112 (VLTA…IPDL). Residues Cys-65 and His-69 each coordinate Cu cation. The 150-residue stretch at 158-307 (DRHTILKTTL…VVADQVAVAL (150 aa)) folds into the GAF domain. Residues 350 to 589 (VMNHEMRTPM…IFIVKLGFAE (240 aa)) enclose the Histidine kinase domain. Phosphohistidine; by autocatalysis is present on His-353. The region spanning 612–729 (PGLKVLVMDD…KMRSVLSELL (118 aa)) is the Response regulatory domain. The residue at position 660 (Asp-660) is a 4-aspartylphosphate.

Belongs to the ethylene receptor family. As to quaternary structure, homodimer; disulfide-linked. Cu cation serves as cofactor. In terms of processing, activation probably requires a transfer of a phosphate group between a His in the transmitter domain and an Asp of the receiver domain.

It is found in the endoplasmic reticulum membrane. It catalyses the reaction ATP + protein L-histidine = ADP + protein N-phospho-L-histidine.. Functionally, may act early in the ethylene signal transduction pathway, possibly as an ethylene receptor, or as a regulator of the pathway. In Prunus persica (Peach), this protein is Ethylene receptor (ETR1).